The chain runs to 134 residues: Small ribosomal subunit protein uS8c (134 aa).

It belongs to the universal ribosomal protein uS8 family. As to quaternary structure, part of the 30S ribosomal subunit.

The protein localises to the plastid. It is found in the chloroplast. One of the primary rRNA binding proteins, it binds directly to 16S rRNA central domain where it helps coordinate assembly of the platform of the 30S subunit. The chain is Small ribosomal subunit protein uS8c (rps8) from Gossypium hirsutum (Upland cotton).